Consider the following 122-residue polypeptide: UPF0102 protein ECH_0093 (122 aa).

It belongs to the UPF0102 family.

This Ehrlichia chaffeensis (strain ATCC CRL-10679 / Arkansas) protein is UPF0102 protein ECH_0093.